We begin with the raw amino-acid sequence, 173 residues long: Crossover junction endodeoxyribonuclease RuvC (173 aa).

Catalysis depends on residues Asp8, Glu67, and Asp139. Residues Asp8, Glu67, and Asp139 each contribute to the Mg(2+) site.

It belongs to the RuvC family. Homodimer which binds Holliday junction (HJ) DNA. The HJ becomes 2-fold symmetrical on binding to RuvC with unstacked arms; it has a different conformation from HJ DNA in complex with RuvA. In the full resolvosome a probable DNA-RuvA(4)-RuvB(12)-RuvC(2) complex forms which resolves the HJ. Mg(2+) serves as cofactor.

Its subcellular location is the cytoplasm. The enzyme catalyses Endonucleolytic cleavage at a junction such as a reciprocal single-stranded crossover between two homologous DNA duplexes (Holliday junction).. The RuvA-RuvB-RuvC complex processes Holliday junction (HJ) DNA during genetic recombination and DNA repair. Endonuclease that resolves HJ intermediates. Cleaves cruciform DNA by making single-stranded nicks across the HJ at symmetrical positions within the homologous arms, yielding a 5'-phosphate and a 3'-hydroxyl group; requires a central core of homology in the junction. The consensus cleavage sequence is 5'-(A/T)TT(C/G)-3'. Cleavage occurs on the 3'-side of the TT dinucleotide at the point of strand exchange. HJ branch migration catalyzed by RuvA-RuvB allows RuvC to scan DNA until it finds its consensus sequence, where it cleaves and resolves the cruciform DNA. In Yersinia pseudotuberculosis serotype O:1b (strain IP 31758), this protein is Crossover junction endodeoxyribonuclease RuvC.